The following is a 386-amino-acid chain: Succinate--CoA ligase [ADP-forming] subunit beta (386 aa).

Residues 9–244 (KEILRKYGVP…HDEEDPLETR (236 aa)) enclose the ATP-grasp domain. ATP is bound by residues lysine 46, 53 to 55 (GRG), glutamate 99, cysteine 102, and glutamate 107. Mg(2+) contacts are provided by asparagine 199 and aspartate 213. Substrate contacts are provided by residues asparagine 264 and 321–323 (GIM).

This sequence belongs to the succinate/malate CoA ligase beta subunit family. As to quaternary structure, heterotetramer of two alpha and two beta subunits. It depends on Mg(2+) as a cofactor.

The enzyme catalyses succinate + ATP + CoA = succinyl-CoA + ADP + phosphate. It carries out the reaction GTP + succinate + CoA = succinyl-CoA + GDP + phosphate. It participates in carbohydrate metabolism; tricarboxylic acid cycle; succinate from succinyl-CoA (ligase route): step 1/1. In terms of biological role, succinyl-CoA synthetase functions in the citric acid cycle (TCA), coupling the hydrolysis of succinyl-CoA to the synthesis of either ATP or GTP and thus represents the only step of substrate-level phosphorylation in the TCA. The beta subunit provides nucleotide specificity of the enzyme and binds the substrate succinate, while the binding sites for coenzyme A and phosphate are found in the alpha subunit. This is Succinate--CoA ligase [ADP-forming] subunit beta from Rickettsia massiliae (strain Mtu5).